We begin with the raw amino-acid sequence, 837 residues long: Periplasmic nitrate reductase (837 aa).

A signal peptide (tat-type signal) is located at residues 1–32 (MTSPKLDRRQMLKLEAAAIAAAAAGLPVPALA). In terms of domain architecture, 4Fe-4S Mo/W bis-MGD-type spans 44–100 (LKWDKAACRFCGTGCSVMVATKENRVVATHGDIKAEVNRGLNCVKGYFLSKIMYGHD). Residues Cys-51, Cys-54, Cys-58, and Cys-86 each contribute to the [4Fe-4S] cluster site. Residues Lys-88, Gln-155, Asn-180, Cys-184, 217 to 224 (WGSNMAEM), 248 to 252 (STFEH), 267 to 269 (QTD), Met-378, Gln-382, Asn-488, 514 to 515 (SD), Lys-537, Asp-564, and 724 to 733 (TGRVLEHWHS) each bind Mo-bis(molybdopterin guanine dinucleotide). A substrate-binding site is contributed by Trp-800. Residues Asn-808 and Lys-825 each contribute to the Mo-bis(molybdopterin guanine dinucleotide) site.

It belongs to the prokaryotic molybdopterin-containing oxidoreductase family. NasA/NapA/NarB subfamily. In terms of assembly, component of the periplasmic nitrate reductase NapAB complex composed of NapA and NapB. [4Fe-4S] cluster is required as a cofactor. It depends on Mo-bis(molybdopterin guanine dinucleotide) as a cofactor. Predicted to be exported by the Tat system. The position of the signal peptide cleavage has not been experimentally proven.

Its subcellular location is the periplasm. It carries out the reaction 2 Fe(II)-[cytochrome] + nitrate + 2 H(+) = 2 Fe(III)-[cytochrome] + nitrite + H2O. Functionally, catalytic subunit of the periplasmic nitrate reductase complex NapAB. Receives electrons from NapB and catalyzes the reduction of nitrate to nitrite. The protein is Periplasmic nitrate reductase of Bradyrhizobium diazoefficiens (strain JCM 10833 / BCRC 13528 / IAM 13628 / NBRC 14792 / USDA 110).